A 270-amino-acid polypeptide reads, in one-letter code: Interleukin-1 alpha (270 aa).

Positions methionine 1 to arginine 112 are excised as a propeptide. An N6-acetyllysine modification is found at lysine 82. Positions lysine 82 to leucine 86 are nuclear localization signal (NLS). A Phosphoserine modification is found at serine 87. 2 N-linked (GlcNAc...) asparagine glycosylation sites follow: asparagine 102 and asparagine 141.

Belongs to the IL-1 family. Monomer. Interacts with TMED10; the interaction mediates the translocation from the cytoplasm into the ERGIC (endoplasmic reticulum-Golgi intermediate compartment) and thereby secretion. Interacts with IL1R1. Interacts with S100A13; this interaction is the first step in the export of IL1A, followed by direct translocation of this complex across the plasma membrane. Post-translationally, acetylated within its nuclear localization sequence, which impacts subcellular localization. In terms of processing, proteolytic processed by CAPN1 in a calcium-dependent manner. Cleavage from 31 kDa precursor to 18 kDa biologically active molecules. Phosphorylated. Phosphorylation greatly enhances susceptibility to digestion and promotes the conversion of pre-IL1A alpha to the biologically active IL1A.

Its subcellular location is the nucleus. The protein resides in the cytoplasm. The protein localises to the secreted. Functionally, cytokine constitutively present intracellularly in nearly all resting non-hematopoietic cells that plays an important role in inflammation and bridges the innate and adaptive immune systems. After binding to its receptor IL1R1 together with its accessory protein IL1RAP, forms the high affinity interleukin-1 receptor complex. Signaling involves the recruitment of adapter molecules such as MYD88, IRAK1 or IRAK4. In turn, mediates the activation of NF-kappa-B and the three MAPK pathways p38, p42/p44 and JNK pathways. Within the cell, acts as an alarmin and cell death results in its liberation in the extracellular space after disruption of the cell membrane to induce inflammation and alert the host to injury or damage. In addition to its role as a danger signal, which occurs when the cytokine is passively released by cell necrosis, directly senses DNA damage and acts as signal for genotoxic stress without loss of cell integrity. The polypeptide is Interleukin-1 alpha (IL1A) (Sus scrofa (Pig)).